A 111-amino-acid polypeptide reads, in one-letter code: Aspartate 1-decarboxylase (111 aa).

Residue Ser25 is the Schiff-base intermediate with substrate; via pyruvic acid of the active site. The residue at position 25 (Ser25) is a Pyruvic acid (Ser). Substrate is bound at residue Thr57. Tyr58 serves as the catalytic Proton donor. 73–75 (GPA) lines the substrate pocket.

This sequence belongs to the PanD family. Heterooctamer of four alpha and four beta subunits. Requires pyruvate as cofactor. Is synthesized initially as an inactive proenzyme, which is activated by self-cleavage at a specific serine bond to produce a beta-subunit with a hydroxyl group at its C-terminus and an alpha-subunit with a pyruvoyl group at its N-terminus.

Its subcellular location is the cytoplasm. The catalysed reaction is L-aspartate + H(+) = beta-alanine + CO2. It participates in cofactor biosynthesis; (R)-pantothenate biosynthesis; beta-alanine from L-aspartate: step 1/1. Its function is as follows. Catalyzes the pyruvoyl-dependent decarboxylation of aspartate to produce beta-alanine. This is Aspartate 1-decarboxylase from Coxiella burnetii (strain RSA 493 / Nine Mile phase I).